Here is a 208-residue protein sequence, read N- to C-terminus: Large ribosomal subunit protein uL3 (208 aa).

Glutamine 149 is subject to N5-methylglutamine.

This sequence belongs to the universal ribosomal protein uL3 family. In terms of assembly, part of the 50S ribosomal subunit. Forms a cluster with proteins L14 and L19. In terms of processing, methylated by PrmB.

One of the primary rRNA binding proteins, it binds directly near the 3'-end of the 23S rRNA, where it nucleates assembly of the 50S subunit. This is Large ribosomal subunit protein uL3 from Haemophilus influenzae (strain 86-028NP).